The following is a 72-amino-acid chain: MSKQDVIELEGVVKEALPNAMFIVTLENGHEVLGHISGKLRMNFIRILPGDKVTVELSPYDLSRGRITWRKK.

The S1-like domain occupies 1–72 (MSKQDVIELE…SRGRITWRKK (72 aa)).

The protein belongs to the IF-1 family. Component of the 30S ribosomal translation pre-initiation complex which assembles on the 30S ribosome in the order IF-2 and IF-3, IF-1 and N-formylmethionyl-tRNA(fMet); mRNA recruitment can occur at any time during PIC assembly.

The protein resides in the cytoplasm. In terms of biological role, one of the essential components for the initiation of protein synthesis. Stabilizes the binding of IF-2 and IF-3 on the 30S subunit to which N-formylmethionyl-tRNA(fMet) subsequently binds. Helps modulate mRNA selection, yielding the 30S pre-initiation complex (PIC). Upon addition of the 50S ribosomal subunit IF-1, IF-2 and IF-3 are released leaving the mature 70S translation initiation complex. This Alkaliphilus oremlandii (strain OhILAs) (Clostridium oremlandii (strain OhILAs)) protein is Translation initiation factor IF-1.